The sequence spans 258 residues: Ubiquinone/menaquinone biosynthesis C-methyltransferase UbiE (258 aa).

Residues threonine 81, aspartate 102, and 130–131 each bind S-adenosyl-L-methionine; that span reads NA.

Belongs to the class I-like SAM-binding methyltransferase superfamily. MenG/UbiE family.

It carries out the reaction a 2-demethylmenaquinol + S-adenosyl-L-methionine = a menaquinol + S-adenosyl-L-homocysteine + H(+). It catalyses the reaction a 2-methoxy-6-(all-trans-polyprenyl)benzene-1,4-diol + S-adenosyl-L-methionine = a 5-methoxy-2-methyl-3-(all-trans-polyprenyl)benzene-1,4-diol + S-adenosyl-L-homocysteine + H(+). The protein operates within quinol/quinone metabolism; menaquinone biosynthesis; menaquinol from 1,4-dihydroxy-2-naphthoate: step 2/2. It participates in cofactor biosynthesis; ubiquinone biosynthesis. Its function is as follows. Methyltransferase required for the conversion of demethylmenaquinol (DMKH2) to menaquinol (MKH2) and the conversion of 2-polyprenyl-6-methoxy-1,4-benzoquinol (DDMQH2) to 2-polyprenyl-3-methyl-6-methoxy-1,4-benzoquinol (DMQH2). In Allorhizobium ampelinum (strain ATCC BAA-846 / DSM 112012 / S4) (Agrobacterium vitis (strain S4)), this protein is Ubiquinone/menaquinone biosynthesis C-methyltransferase UbiE.